A 694-amino-acid chain; its full sequence is Elongation factor G 2 (694 aa).

A tr-type G domain is found at 6–282 (SKLRNIGISA…GVVDYLPDPT (277 aa)). Residues 15–22 (AHIDSGKT), 82–86 (DTPGH), and 136–139 (NKCD) each bind GTP.

The protein belongs to the TRAFAC class translation factor GTPase superfamily. Classic translation factor GTPase family. EF-G/EF-2 subfamily.

The protein localises to the cytoplasm. Functionally, catalyzes the GTP-dependent ribosomal translocation step during translation elongation. During this step, the ribosome changes from the pre-translocational (PRE) to the post-translocational (POST) state as the newly formed A-site-bound peptidyl-tRNA and P-site-bound deacylated tRNA move to the P and E sites, respectively. Catalyzes the coordinated movement of the two tRNA molecules, the mRNA and conformational changes in the ribosome. This Anaeromyxobacter dehalogenans (strain 2CP-C) protein is Elongation factor G 2.